The chain runs to 382 residues: MADDKKTNEYTVEMDKLDHGNKNFEAPAPAVRPRGPPAAQLANNPILPVLAYCGSSILMTVMNKYVLSGTDFNLNFFLLCVQSIVCIVAIQTCKSSKLITYRDFNSDEAKKWFPITLLLIGMIYTGSKALQYLSIPVYTIFKNLTIILIAYGEVLWFGGSVTGMTLFSFGLMVLSSIIAAWADIKHAVESSGDATAKVSTLNAGYIWMLINCLCTSSYVLGMRKRIKLTNFKDFDTMFYNNLLSIPVLLVLTFLMEDWSSANIARNFPPADRNGILFAMILSGLSSVFISYTSAWCVRVTSSTTYSMVGALNKLPIALSGLIFFDAPVTFPSVSAIVVGFISGIVYAVAKIKQSAKPKTGVLPMSNPPVSASSQSMRDSLRS.

Residues 1 to 40 lie on the Cytoplasmic side of the membrane; that stretch reads MADDKKTNEYTVEMDKLDHGNKNFEAPAPAVRPRGPPAAQ. Residues 41-61 form a helical membrane-spanning segment; it reads LANNPILPVLAYCGSSILMTV. Over 62 to 71 the chain is Lumenal; the sequence is MNKYVLSGTD. The chain crosses the membrane as a helical span at residues 72–92; the sequence is FNLNFFLLCVQSIVCIVAIQT. Residues 93-110 lie on the Cytoplasmic side of the membrane; that stretch reads CKSSKLITYRDFNSDEAK. A helical transmembrane segment spans residues 111–127; that stretch reads KWFPITLLLIGMIYTGS. At 128–134 the chain is on the lumenal side; the sequence is KALQYLS. A helical membrane pass occupies residues 135–151; that stretch reads IPVYTIFKNLTIILIAY. The Cytoplasmic segment spans residues 152 to 160; sequence GEVLWFGGS. Residues 161-182 form a helical membrane-spanning segment; the sequence is VTGMTLFSFGLMVLSSIIAAWA. Topologically, residues 183-200 are lumenal; it reads DIKHAVESSGDATAKVST. A helical transmembrane segment spans residues 201–221; sequence LNAGYIWMLINCLCTSSYVLG. The Cytoplasmic segment spans residues 222 to 233; it reads MRKRIKLTNFKD. Residues 234–254 form a helical membrane-spanning segment; sequence FDTMFYNNLLSIPVLLVLTFL. The Lumenal segment spans residues 255 to 274; the sequence is MEDWSSANIARNFPPADRNG. A helical transmembrane segment spans residues 275-295; it reads ILFAMILSGLSSVFISYTSAW. Residues 296 to 303 lie on the Cytoplasmic side of the membrane; it reads CVRVTSST. The helical transmembrane segment at 304 to 324 threads the bilayer; the sequence is TYSMVGALNKLPIALSGLIFF. At 325-327 the chain is on the lumenal side; sequence DAP. A helical transmembrane segment spans residues 328–348; that stretch reads VTFPSVSAIVVGFISGIVYAV. Residues 349 to 382 are Cytoplasmic-facing; the sequence is AKIKQSAKPKTGVLPMSNPPVSASSQSMRDSLRS. The segment at 358 to 382 is disordered; it reads KTGVLPMSNPPVSASSQSMRDSLRS. Residues 367 to 382 are compositionally biased toward polar residues; it reads PPVSASSQSMRDSLRS.

Belongs to the TPT transporter family. SLC35D subfamily. Homooligomer.

The protein resides in the golgi apparatus membrane. It localises to the cytoplasmic vesicle membrane. Its subcellular location is the endoplasmic reticulum membrane. Functionally, involved in the import of GDP-mannose from the cytoplasm into the Golgi lumen. The polypeptide is GDP-mannose transporter 1 (gmt1) (Neosartorya fischeri (strain ATCC 1020 / DSM 3700 / CBS 544.65 / FGSC A1164 / JCM 1740 / NRRL 181 / WB 181) (Aspergillus fischerianus)).